The primary structure comprises 174 residues: Putative NADH dehydrogenase/NAD(P)H nitroreductase AF_2267 (174 aa).

107 to 112 (AARCLG) is an NAD(+) binding site.

The protein belongs to the nitroreductase family. The cofactor is FMN.

The sequence is that of Putative NADH dehydrogenase/NAD(P)H nitroreductase AF_2267 from Archaeoglobus fulgidus (strain ATCC 49558 / DSM 4304 / JCM 9628 / NBRC 100126 / VC-16).